The chain runs to 470 residues: Putative multidrug resistance protein MdtD (470 aa).

Residues 1–11 (MTELPDNTRWQ) are Periplasmic-facing. A helical transmembrane segment spans residues 12-32 (LWIVAFGFFMQSLDTTIVNTA). Over 33–48 (LPSMAKSLGESPLHMH) the chain is Cytoplasmic. The helical transmembrane segment at 49-69 (MVVVSYVLTVAVMLPASGWLA) threads the bilayer. The Periplasmic portion of the chain corresponds to 70 to 76 (DKIGVRN). The helical transmembrane segment at 77–97 (IFFAAIVLFTLGSLFCALSGT) threads the bilayer. Topologically, residues 98–101 (LNQL) are cytoplasmic. A helical transmembrane segment spans residues 102 to 124 (VLARVLQGVGGAMMVPVGRLTVM). Residues 125–137 (KIVPRAQYMAAMT) are Periplasmic-facing. The helical transmembrane segment at 138–158 (FVTLPGQIGPLLGPALGGVLV) threads the bilayer. Topologically, residues 159–164 (EYASWH) are cytoplasmic. The chain crosses the membrane as a helical span at residues 165–185 (WIFLINIPVGIVGAMATFMLM). Residues 186–196 (PNYTIETRRFD) are Periplasmic-facing. The helical transmembrane segment at 197 to 217 (LPGFLLLAIGMAVLTLALDGS) threads the bilayer. The Cytoplasmic segment spans residues 218 to 224 (KSMGISP). The chain crosses the membrane as a helical span at residues 225–245 (WTLAGLAAGGAAAILLYLFHA). At 246-262 (KKSSGALFSLRLFRTPT) the chain is on the periplasmic side. The chain crosses the membrane as a helical span at residues 263–283 (FSLGLLGSFAGRIGSGMLPFM). Residues 284 to 285 (TP) are Cytoplasmic-facing. The chain crosses the membrane as a helical span at residues 286–306 (VFLQIGLGFSPFHAGLMMIPM). At 307–341 (VLGSMGMKRIVVQIVNRFGYRRVLVATTLGLALVS) the chain is on the periplasmic side. A helical membrane pass occupies residues 342 to 362 (LLFMSVALLGWYYLLPLVLLL). Residues 363–395 (QGMVNSARFSSMNTLTLKDLPDTLASSGNSLLS) lie on the Cytoplasmic side of the membrane. Residues 396–416 (MIMQLSMSIGVTIAGMLLGMF) form a helical membrane-spanning segment. Topologically, residues 417–430 (GQQHIGIDSSATHH) are periplasmic. A helical membrane pass occupies residues 431–451 (VFMYTWLCMAVIIALPAIIFA). Over 452–470 (RVPNDTQQNMVISRRKRSL) the chain is Cytoplasmic.

It belongs to the major facilitator superfamily. TCR/Tet family.

The protein localises to the cell inner membrane. In Salmonella paratyphi A (strain ATCC 9150 / SARB42), this protein is Putative multidrug resistance protein MdtD.